The sequence spans 401 residues: Adenylosuccinate synthetase (401 aa).

Residues 11 to 17 and 39 to 41 contribute to the GTP site; these read GDEGKGK and GHT. Aspartate 12 serves as the catalytic Proton acceptor. Aspartate 12 and glycine 39 together coordinate Mg(2+). IMP-binding positions include 12 to 15, 37 to 40, threonine 127, arginine 141, glutamine 212, threonine 227, and arginine 290; these read DEGK and NAGH. The active-site Proton donor is the histidine 40. Residue 286 to 292 coordinates substrate; it reads ATTGRPR. GTP contacts are provided by residues arginine 292, 318–320, and 390–392; these read KGD and SVG.

The protein belongs to the adenylosuccinate synthetase family. As to quaternary structure, homodimer. The cofactor is Mg(2+).

Its subcellular location is the cytoplasm. The catalysed reaction is IMP + L-aspartate + GTP = N(6)-(1,2-dicarboxyethyl)-AMP + GDP + phosphate + 2 H(+). The protein operates within purine metabolism; AMP biosynthesis via de novo pathway; AMP from IMP: step 1/2. Functionally, plays an important role in the de novo pathway of purine nucleotide biosynthesis. Catalyzes the first committed step in the biosynthesis of AMP from IMP. The sequence is that of Adenylosuccinate synthetase from Thermosipho africanus (strain TCF52B).